We begin with the raw amino-acid sequence, 98 residues long: NADH-ubiquinone oxidoreductase chain 4L (98 aa).

The next 3 membrane-spanning stretches (helical) occupy residues 1 to 21 (MVLIKLNIIMAFMLALTGVLI), 36 to 56 (MMLSLFIFMAAVITHFHMFSI), and 61 to 81 (LILLVFSACEAGVGLALLVTI).

The protein belongs to the complex I subunit 4L family. Core subunit of respiratory chain NADH dehydrogenase (Complex I) which is composed of 45 different subunits.

It is found in the mitochondrion inner membrane. It catalyses the reaction a ubiquinone + NADH + 5 H(+)(in) = a ubiquinol + NAD(+) + 4 H(+)(out). Core subunit of the mitochondrial membrane respiratory chain NADH dehydrogenase (Complex I) which catalyzes electron transfer from NADH through the respiratory chain, using ubiquinone as an electron acceptor. Part of the enzyme membrane arm which is embedded in the lipid bilayer and involved in proton translocation. This is NADH-ubiquinone oxidoreductase chain 4L (MT-ND4L) from Metachirus nudicaudatus (Brown four-eyed opossum).